A 168-amino-acid chain; its full sequence is uncharacterized protein (168 aa).

Helical transmembrane passes span 4–24 and 94–114; these read IIAL…PEEE and IMVG…GFAW.

It to A.aeolicus aq_1446.

The protein resides in the cell membrane. This is an uncharacterized protein from Aquifex aeolicus (strain VF5).